A 1037-amino-acid chain; its full sequence is Probable inorganic carbon transporter subunit DabA 2 (1037 aa).

Zn(2+)-binding residues include Cys460, Asp462, His719, and Cys734.

It belongs to the inorganic carbon transporter (TC 9.A.2) DabA family. In terms of assembly, forms a complex with DabB. Zn(2+) is required as a cofactor.

Its subcellular location is the cell inner membrane. Its function is as follows. Part of an energy-coupled inorganic carbon pump. This Nitrobacter winogradskyi (strain ATCC 25391 / DSM 10237 / CIP 104748 / NCIMB 11846 / Nb-255) protein is Probable inorganic carbon transporter subunit DabA 2.